The following is a 201-amino-acid chain: Peptide deformylase (201 aa).

Positions 1-24 are disordered; it reads MANHFSQLAKKSKTNGNSEKIAKE. Fe cation-binding residues include cysteine 121 and histidine 163. Glutamate 164 is an active-site residue. A Fe cation-binding site is contributed by histidine 167.

The protein belongs to the polypeptide deformylase family. It depends on Fe(2+) as a cofactor.

It catalyses the reaction N-terminal N-formyl-L-methionyl-[peptide] + H2O = N-terminal L-methionyl-[peptide] + formate. Removes the formyl group from the N-terminal Met of newly synthesized proteins. Requires at least a dipeptide for an efficient rate of reaction. N-terminal L-methionine is a prerequisite for activity but the enzyme has broad specificity at other positions. The protein is Peptide deformylase of Prochlorococcus marinus (strain MIT 9312).